A 137-amino-acid chain; its full sequence is Large-conductance mechanosensitive channel (137 aa).

3 consecutive transmembrane segments (helical) span residues 15–35 (IDLA…NSIV), 38–58 (ILMP…MFIQ), and 80–100 (GNFI…FLFV).

This sequence belongs to the MscL family. Homopentamer.

Its subcellular location is the cell inner membrane. Its function is as follows. Channel that opens in response to stretch forces in the membrane lipid bilayer. May participate in the regulation of osmotic pressure changes within the cell. In Bartonella quintana (strain Toulouse) (Rochalimaea quintana), this protein is Large-conductance mechanosensitive channel.